Here is a 299-residue protein sequence, read N- to C-terminus: Deoxyhypusine hydroxylase (299 aa).

HEAT-like PBS-type repeat units lie at residues 54 to 80, 87 to 113, 174 to 200, 205 to 231, and 238 to 264; these read LKHE…VLQD, VRHE…YSED, DRYR…GLRA, FRHE…ALRS, and VRHE…FAQD. 3 residues coordinate Fe cation: histidine 56, histidine 89, and glutamate 90. Fe cation contacts are provided by histidine 207, histidine 240, and glutamate 241.

Belongs to the deoxyhypusine hydroxylase family. Fe(2+) serves as cofactor.

The catalysed reaction is [eIF5A protein]-deoxyhypusine + AH2 + O2 = [eIF5A protein]-hypusine + A + H2O. The protein operates within protein modification; eIF5A hypusination. Catalyzes the hydroxylation of the N(6)-(4-aminobutyl)-L-lysine intermediate produced by deoxyhypusine synthase/DHPS on a critical lysine of the eukaryotic translation initiation factor 5A/eIF-5A. This is the second step of the post-translational modification of that lysine into an unusual amino acid residue named hypusine. Hypusination is unique to mature eIF-5A factor and is essential for its function. The sequence is that of Deoxyhypusine hydroxylase from Gallus gallus (Chicken).